Here is a 280-residue protein sequence, read N- to C-terminus: MEKIAIVTDSLSDIPEDLIKTYGIFVVPLTINIDGKSYKDGVDIKKEEFYKLLREGKMPTTTQASPVEFMEVFEDLLKSFDYVIAIILTSKFSGTYQSAVIARDMVDKNRIEVIDSRHFTLGNGMLVLKAARMAVEGASKEEIVSTVYETIPRIRGIMVFDSLDYLYRGGRLSRTQSIIGGILNVKPILTNEDGELKVIDKVRGQKKAIRWIIDYMKNTGIDFAEREVGLIHTDKEEFLNEIEAALRSELEITRFIRSQAGCGIGTHAGPDAAGVFFEEK.

In terms of domain architecture, DegV spans 4–279 (IAIVTDSLSD…PDAAGVFFEE (276 aa)). Hexadecanoate contacts are provided by threonine 61 and serine 93.

In terms of biological role, may bind long-chain fatty acids, such as palmitate, and may play a role in lipid transport or fatty acid metabolism. The protein is DegV domain-containing protein TTE1491 of Caldanaerobacter subterraneus subsp. tengcongensis (strain DSM 15242 / JCM 11007 / NBRC 100824 / MB4) (Thermoanaerobacter tengcongensis).